An 88-amino-acid chain; its full sequence is MGTARFLRAVLLLSVLLMVTFPALLSAEHHDGRVDICRLPSDSGDCLRFFEMWCFDGTTCTKFVYGGYGGNDNRFPTEKACMKRCAKA.

A signal peptide spans 1–27; the sequence is MGTARFLRAVLLLSVLLMVTFPALLSA. Positions 28-33 are excised as a propeptide; that stretch reads EHHDGR. Residues 37-85 form the BPTI/Kunitz inhibitor domain; the sequence is CRLPSDSGDCLRFFEMWCFDGTTCTKFVYGGYGGNDNRFPTEKACMKRC. 2 disulfide bridges follow: C37–C85 and C60–C81.

This sequence belongs to the venom Kunitz-type family. 03 (sub-Kunitz) subfamily. As to expression, expressed by the venom gland.

The protein resides in the secreted. Functionally, serine protease inhibitor that inhibits trypsin at a molar ratio of 1:1. The sequence is that of Kunitz-type U15-theraphotoxin-Hhn1k from Cyriopagopus hainanus (Chinese bird spider).